Consider the following 93-residue polypeptide: Small ribosomal subunit protein bS18 (93 aa).

A compositionally biased stretch (basic residues) spans 1–11; the sequence is MAPSARNRKPG. A disordered region spans residues 1 to 27; that stretch reads MAPSARNRKPGARSMAKAAALRKPKKK.

It belongs to the bacterial ribosomal protein bS18 family. Part of the 30S ribosomal subunit. Forms a tight heterodimer with protein bS6.

Binds as a heterodimer with protein bS6 to the central domain of the 16S rRNA, where it helps stabilize the platform of the 30S subunit. This is Small ribosomal subunit protein bS18 from Salinispora tropica (strain ATCC BAA-916 / DSM 44818 / JCM 13857 / NBRC 105044 / CNB-440).